A 357-amino-acid polypeptide reads, in one-letter code: MNTLFMHCRPGFEGEVCSEIADLAARLDVSGYAKARPDTACAEFICTEADGAERLMNGQRFDTLIFPRQWARGLFLDLPETDRISVILAQLSTFPTCGSLWLEVVDTNDGKELSNFCKKFEAPLRKALTQAGKLVDDPRKPRLLLTFKSGREVFLGLAEADNSAMWPMGIPRLKFPREAPSRSTLKLEEAWHHFIPRDQWDERLSGDMTGVDLGAAPGGWTYQLVRRGMLVTAIDNGPMAESLMDTGLVQHLMADGFTYKPRHPVDWMVCDIVEKPARNAALLETWLGEGLCREAVVNLKLPMKQRYAEVRRLLDRIEEGFQARGVRVSIGCKQLYHDREEVTCHLRRLDVAKAARK.

S-adenosyl-L-methionine contacts are provided by residues Ser183, 216-219 (APGG), Asp235, Asp255, and Asp271. Catalysis depends on Lys300, which acts as the Proton acceptor.

The protein belongs to the class I-like SAM-binding methyltransferase superfamily. RNA methyltransferase RlmE family. RlmM subfamily. As to quaternary structure, monomer.

The protein localises to the cytoplasm. It carries out the reaction cytidine(2498) in 23S rRNA + S-adenosyl-L-methionine = 2'-O-methylcytidine(2498) in 23S rRNA + S-adenosyl-L-homocysteine + H(+). Its function is as follows. Catalyzes the 2'-O-methylation at nucleotide C2498 in 23S rRNA. This is Ribosomal RNA large subunit methyltransferase M from Pseudomonas syringae pv. tomato (strain ATCC BAA-871 / DC3000).